Reading from the N-terminus, the 362-residue chain is Probable cysteine protease RDL2 (362 aa).

The first 28 residues, 1 to 28 (MAATPIRVIVSALVILSVLLLSSSLGVA), serve as a signal peptide directing secretion. Positions 29-129 (TETEIERNET…ERYLYKEGDV (101 aa)) are cleaved as a propeptide — activation peptide. Residue N36 is glycosylated (N-linked (GlcNAc...) asparagine). Intrachain disulfides connect C151/C194 and C185/C228. Residue C154 is part of the active site. An N-linked (GlcNAc...) asparagine glycan is attached at N234. A disulfide bond links C287 and C338. Residues H293 and N313 contribute to the active site.

This sequence belongs to the peptidase C1 family.

Probable thiol protease. In Arabidopsis thaliana (Mouse-ear cress), this protein is Probable cysteine protease RDL2.